We begin with the raw amino-acid sequence, 1794 residues long: Protein TIC 214 (1794 aa).

A run of 6 helical transmembrane segments spans residues 19–39 (IINS…FSIG), 68–88 (FIAG…HLAL), 91–111 (PHTI…WNNH), 133–153 (VFLN…SSML), 176–196 (VGWL…LVWI), and 227–247 (IFSI…PSPI).

It belongs to the TIC214 family. Part of the Tic complex.

The protein localises to the plastid. Its subcellular location is the chloroplast inner membrane. Its function is as follows. Involved in protein precursor import into chloroplasts. May be part of an intermediate translocation complex acting as a protein-conducting channel at the inner envelope. The protein is Protein TIC 214 of Olimarabidopsis pumila (Dwarf rocket).